We begin with the raw amino-acid sequence, 379 residues long: Homoserine O-succinyltransferase (379 aa).

Residues 51–360 form the AB hydrolase-1 domain; the sequence is NAVLICHALS…DAPQGHDAFL (310 aa). Residue Ser157 is the Nucleophile of the active site. Arg227 serves as a coordination point for substrate. Residues Asp323 and His356 contribute to the active site. Asp357 lines the substrate pocket.

The protein belongs to the AB hydrolase superfamily. MetX family. In terms of assembly, homodimer.

It is found in the cytoplasm. The catalysed reaction is L-homoserine + succinyl-CoA = O-succinyl-L-homoserine + CoA. Its pathway is amino-acid biosynthesis; L-methionine biosynthesis via de novo pathway; O-succinyl-L-homoserine from L-homoserine: step 1/1. Its function is as follows. Transfers a succinyl group from succinyl-CoA to L-homoserine, forming succinyl-L-homoserine. The chain is Homoserine O-succinyltransferase from Pseudomonas savastanoi pv. phaseolicola (strain 1448A / Race 6) (Pseudomonas syringae pv. phaseolicola (strain 1448A / Race 6)).